The sequence spans 250 residues: Aquaporin SIP2-1 (250 aa).

The next 2 membrane-spanning stretches (helical) occupy residues 14 to 34 (PWLV…GALV) and 55 to 75 (VALS…TGGA). Residues 78-80 (NPL) carry the NPA 1 motif. The next 4 membrane-spanning stretches (helical) occupy residues 95-115 (LYLF…ILGV), 132-152 (SVGV…VVIV), 178-200 (FHLL…AWAY), and 211-231 (LLVY…VVTL). Residues 191 to 193 (NPA) carry the NPA 2 motif.

Belongs to the MIP/aquaporin (TC 1.A.8) family. SIP (TC 1.A.8.10) subfamily. Expressed in leaves and anthers, and at lower levels in roots.

The protein localises to the membrane. Its function is as follows. Aquaporins facilitate the transport of water and small neutral solutes across cell membranes. This Oryza sativa subsp. japonica (Rice) protein is Aquaporin SIP2-1 (SIP2-1).